The primary structure comprises 138 residues: uncharacterized protein (138 aa).

This is an uncharacterized protein from Archaeoglobus fulgidus (strain ATCC 49558 / DSM 4304 / JCM 9628 / NBRC 100126 / VC-16).